Here is a 356-residue protein sequence, read N- to C-terminus: MAGLKLQAVTKSWDGKTQVIKPLTLDVADGEFIVMVGPSGCGKSTLLRMVAGLERVTEGDIWINDQRVTEMEPKDRGIAMVFQNYALYPHMSVEENMAWGLKIRGMGKQQIAERVKEAARILELDGLLKRRPRELSGGQRQRVAMGRAIVRDPAVFLFDEPLSNLDAKLRVQMRLELQQLHRRLKTTSLYVTHDQVEAMTLAQRVMVMNGGVAEQIGTPVEVYEKPASLFVASFIGSPAMNLLTGRVNNEGTHFELDGGIVLPLNGGYRQYAGRKMTLGIRPEHIALSSQAEGGVPLVMDTLEILGADNLAHGRWGEQKLVVRLAHQERPTAGSTLWLHLAENQLHLFDGETGQRV.

The region spanning 4 to 235 is the ABC transporter domain; the sequence is LKLQAVTKSW…PASLFVASFI (232 aa). 37-44 provides a ligand contact to ATP; the sequence is GPSGCGKS.

The protein belongs to the ABC transporter superfamily. sn-glycerol-3-phosphate importer (TC 3.A.1.1.3) family. In terms of assembly, the complex is composed of two ATP-binding proteins (UgpC), two transmembrane proteins (UgpA and UgpE) and a solute-binding protein (UgpB).

The protein resides in the cell inner membrane. The enzyme catalyses sn-glycerol 3-phosphate(out) + ATP + H2O = sn-glycerol 3-phosphate(in) + ADP + phosphate + H(+). In terms of biological role, part of the ABC transporter complex UgpBAEC involved in sn-glycerol-3-phosphate (G3P) import. Responsible for energy coupling to the transport system. In Shigella sonnei (strain Ss046), this protein is sn-glycerol-3-phosphate import ATP-binding protein UgpC.